A 250-amino-acid polypeptide reads, in one-letter code: Enoyl-[acyl-carrier-protein] reductase [NADH] FabI (250 aa).

NAD(+) is bound by residues Gly12, 18-19 (SI), Gln39, 61-62 (DV), and Ile89. Residue Ala92 coordinates substrate. Residues Tyr142 and Tyr152 each act as proton acceptor in the active site. NAD(+) contacts are provided by residues Lys159 and 188-192 (IKTLA).

The protein belongs to the short-chain dehydrogenases/reductases (SDR) family. FabI subfamily. As to quaternary structure, homotetramer.

It carries out the reaction a 2,3-saturated acyl-[ACP] + NAD(+) = a (2E)-enoyl-[ACP] + NADH + H(+). The protein operates within lipid metabolism; fatty acid biosynthesis. Its activity is regulated as follows. Inhibited by triclosan and its diphenyl ether analgues. Catalyzes the reduction of a carbon-carbon double bond in an enoyl moiety that is covalently linked to an acyl carrier protein (ACP). Involved in the elongation cycle of fatty acid which are used in the lipid metabolism. The sequence is that of Enoyl-[acyl-carrier-protein] reductase [NADH] FabI (fabI) from Enterococcus faecalis (strain ATCC 700802 / V583).